The primary structure comprises 352 residues: N-acetyl-gamma-glutamyl-phosphate reductase (352 aa).

Residue Cys-149 is part of the active site.

Belongs to the NAGSA dehydrogenase family. Type 1 subfamily.

The protein resides in the cytoplasm. The catalysed reaction is N-acetyl-L-glutamate 5-semialdehyde + phosphate + NADP(+) = N-acetyl-L-glutamyl 5-phosphate + NADPH + H(+). It participates in amino-acid biosynthesis; L-arginine biosynthesis; N(2)-acetyl-L-ornithine from L-glutamate: step 3/4. Catalyzes the NADPH-dependent reduction of N-acetyl-5-glutamyl phosphate to yield N-acetyl-L-glutamate 5-semialdehyde. This is N-acetyl-gamma-glutamyl-phosphate reductase from Polynucleobacter asymbioticus (strain DSM 18221 / CIP 109841 / QLW-P1DMWA-1) (Polynucleobacter necessarius subsp. asymbioticus).